The primary structure comprises 529 residues: Bifunctional purine biosynthesis protein PurH (529 aa).

Residues M1–V148 form the MGS-like domain. Position 287 is an N6-acetyllysine (K287).

It belongs to the PurH family.

It carries out the reaction (6R)-10-formyltetrahydrofolate + 5-amino-1-(5-phospho-beta-D-ribosyl)imidazole-4-carboxamide = 5-formamido-1-(5-phospho-D-ribosyl)imidazole-4-carboxamide + (6S)-5,6,7,8-tetrahydrofolate. The enzyme catalyses IMP + H2O = 5-formamido-1-(5-phospho-D-ribosyl)imidazole-4-carboxamide. It participates in purine metabolism; IMP biosynthesis via de novo pathway; 5-formamido-1-(5-phospho-D-ribosyl)imidazole-4-carboxamide from 5-amino-1-(5-phospho-D-ribosyl)imidazole-4-carboxamide (10-formyl THF route): step 1/1. It functions in the pathway purine metabolism; IMP biosynthesis via de novo pathway; IMP from 5-formamido-1-(5-phospho-D-ribosyl)imidazole-4-carboxamide: step 1/1. The polypeptide is Bifunctional purine biosynthesis protein PurH (Shigella dysenteriae serotype 1 (strain Sd197)).